The primary structure comprises 342 residues: MISIEGLSKVFSLNKKDIKAVDSLTLNIENGDIYGVIGYSGAGKSTFVRLINRLEEPTSGKVTIGDQVITELNKNDLRVARQDIGMIFQHFNLLWSRTVEDNIGFPLEIAGVDKQEKARRVKELIGLVGLEGREKSYPSQLSGGQKQRVGIARALANSPKVLLCDEATSALDPETTNQILSLLQDINEKLNLTIILITHEMHVIRKICNRVAVMEQGKVVEEGQVLDVFTNPKQLVTRKFVEQVMSSNEDSDISTIIENYPDGVLYRVHFLGETTNQTLISQIAKQFSVDLNIIQGNITQTQAGSYGALVVQVTGNESEIERAKSFIESQESVELEVIQHAK.

The region spanning 2–241 is the ABC transporter domain; the sequence is ISIEGLSKVF…PKQLVTRKFV (240 aa). ATP is bound at residue 38–45; that stretch reads GYSGAGKS.

This sequence belongs to the ABC transporter superfamily. Methionine importer (TC 3.A.1.24) family. As to quaternary structure, the complex is composed of two ATP-binding proteins (MetN), two transmembrane proteins (MetI) and a solute-binding protein (MetQ).

The protein localises to the cell membrane. The catalysed reaction is L-methionine(out) + ATP + H2O = L-methionine(in) + ADP + phosphate + H(+). The enzyme catalyses D-methionine(out) + ATP + H2O = D-methionine(in) + ADP + phosphate + H(+). Part of the ABC transporter complex MetNIQ involved in methionine import. Responsible for energy coupling to the transport system. The polypeptide is Methionine import ATP-binding protein MetN 2 (Oceanobacillus iheyensis (strain DSM 14371 / CIP 107618 / JCM 11309 / KCTC 3954 / HTE831)).